The sequence spans 387 residues: Norsolorinic acid reductase stcV (387 aa).

Residue Asp69 coordinates NADP(+). Tyr74 serves as the catalytic Proton donor. His148 lines the substrate pocket. Residues 178–179 (SD), Gln204, 233–243 (GALGRGQYKSA), and 301–309 (RTVEQLEAN) each bind NADP(+).

This sequence belongs to the aldo/keto reductase family. Aldo/keto reductase 2 subfamily.

It functions in the pathway mycotoxin biosynthesis; sterigmatocystin biosynthesis. Functionally, norsolorinic acid reductase; part of the gene cluster that mediates the biosynthesis of sterigmatocystin (ST), a polyketide-derived furanocoumarin which is part of the most toxic and carcinogenic compounds among the known mycotoxins. The first step in the biosynthesis of sterigmatocystin is the production of hexanoate by the fatty acid synthase (FAS) units stcJ and stcK. The polyketide backbone is assembled by the non-reducing polyketide synthase stcA by condensation of the starter hexanoyl-CoA and 7 malonyl-CoA extender units followed by cyclization and release of norsolorinic acid. Norsolorinic acid is the first stable intermediate in the biosynthesis of sterigmatocystin and is converted into averantin (AVN) by the ketoreductase stcE which reduces the hexanoate ketone to an alcohol. Averantin is then oxidized into 5'-hydroxyaverantin (HAVN) by the cytochrome P450 monooxygenase stcF. 5'-hydroxyaverantin is further converted to 5'-oxyaverantin (OAVN) by the 5'-hydroxyaverantin dehydrogenase stcG. The next step is the conversion of OAVN into averufin (AVF) which is catalyzed by a yet to be identified enzyme. The cytochrome P450 monooxygenase stcB and the flavin-binding monooxygenase stcW are both required for the conversion of averufin to 1-hydroxyversicolorone. The esterase stcI probably catalyzes the formation of versiconal hemiacetal acetate from 1-hydroxyversicolorone. The oxydoreductase stcN then probably catalyzes the biosynthetic step from versiconal to versicolorin B (VERB). The next step is performed by the versicolorin B desaturase stcL to produce versicolorin A (VERA). The ketoreductase stcU and the cytochrome P450 monooxygenase stcS are involved in the conversion of versicolorin A to demethylsterigmatocystin. The Baeyer-Villiger oxidas stcQ and the reductase stcR might be involved in the biosynthetic step from versicolorin A to demethylsterigmatocystin. The final step in the biosynthesis of sterigmatocystin is the methylation of demethylsterigmatocystin catalyzed by the methyltransferase stcP. The protein is Norsolorinic acid reductase stcV of Emericella nidulans (strain FGSC A4 / ATCC 38163 / CBS 112.46 / NRRL 194 / M139) (Aspergillus nidulans).